The sequence spans 200 residues: NADH-quinone oxidoreductase subunit C (200 aa).

The protein belongs to the complex I 30 kDa subunit family. NDH-1 is composed of 14 different subunits. Subunits NuoB, C, D, E, F, and G constitute the peripheral sector of the complex.

The protein resides in the cell inner membrane. The enzyme catalyses a quinone + NADH + 5 H(+)(in) = a quinol + NAD(+) + 4 H(+)(out). In terms of biological role, NDH-1 shuttles electrons from NADH, via FMN and iron-sulfur (Fe-S) centers, to quinones in the respiratory chain. The immediate electron acceptor for the enzyme in this species is believed to be ubiquinone. Couples the redox reaction to proton translocation (for every two electrons transferred, four hydrogen ions are translocated across the cytoplasmic membrane), and thus conserves the redox energy in a proton gradient. The protein is NADH-quinone oxidoreductase subunit C of Burkholderia ambifaria (strain MC40-6).